The primary structure comprises 160 residues: Phosphopantetheine adenylyltransferase (160 aa).

Serine 11 is a substrate binding site. ATP is bound by residues 11–12 (SF) and histidine 19. The substrate site is built by lysine 43, leucine 75, and arginine 89. ATP is bound by residues 90 to 92 (GLR), glutamate 100, and 125 to 131 (YSFISSS).

This sequence belongs to the bacterial CoaD family. Homohexamer. The cofactor is Mg(2+).

It is found in the cytoplasm. It catalyses the reaction (R)-4'-phosphopantetheine + ATP + H(+) = 3'-dephospho-CoA + diphosphate. The protein operates within cofactor biosynthesis; coenzyme A biosynthesis; CoA from (R)-pantothenate: step 4/5. In terms of biological role, reversibly transfers an adenylyl group from ATP to 4'-phosphopantetheine, yielding dephospho-CoA (dPCoA) and pyrophosphate. The polypeptide is Phosphopantetheine adenylyltransferase (Staphylococcus aureus (strain Mu3 / ATCC 700698)).